A 64-amino-acid chain; its full sequence is Large ribosomal subunit protein bL35 (64 aa).

Belongs to the bacterial ribosomal protein bL35 family.

The protein is Large ribosomal subunit protein bL35 of Ectopseudomonas mendocina (strain ymp) (Pseudomonas mendocina).